The following is a 205-amino-acid chain: Thymidine kinase (205 aa).

Residues 9 to 16 (SAMNAGKS) and 87 to 90 (DESQ) each bind ATP. Glu-88 serves as the catalytic Proton acceptor. Residues Cys-145, Cys-147, Cys-182, and His-185 each coordinate Zn(2+).

Belongs to the thymidine kinase family. As to quaternary structure, homotetramer.

The protein localises to the cytoplasm. The catalysed reaction is thymidine + ATP = dTMP + ADP + H(+). The sequence is that of Thymidine kinase from Salmonella paratyphi A (strain ATCC 9150 / SARB42).